The chain runs to 544 residues: (E,E)-germacrene B synthase (544 aa).

The Mg(2+) site is built by D296, D300, and E449. The DDXXD motif signature appears at 296-300 (DDTFD).

The protein belongs to the terpene synthase family. Mg(2+) is required as a cofactor. The cofactor is Mn(2+).

The protein localises to the cytoplasm. The enzyme catalyses (2E,6E)-farnesyl diphosphate = (1E,4E)-germacrene B + diphosphate. The protein operates within secondary metabolite biosynthesis; terpenoid biosynthesis. In terms of biological role, involved in the biosynthesis of germacrene B. In Solanum habrochaites (Wild tomato), this protein is (E,E)-germacrene B synthase (SSTLH1).